The sequence spans 23 residues: Maculatin-1.2 (23 aa).

At Ala23 the chain carries Alanine amide.

Expressed by the skin dorsal glands.

It localises to the secreted. In terms of biological role, shows antibacterial activity against S.aureus and S.uberis. This Ranoidea genimaculata (Brown-spotted tree frog) protein is Maculatin-1.2.